We begin with the raw amino-acid sequence, 65 residues long: Hirudin-2B (65 aa).

The interval 1 to 3 (ITY) is interaction with thrombin active site. Disulfide bonds link Cys6-Cys14, Cys16-Cys28, and Cys22-Cys39. Residues 39–65 (CVTGEGTPKPQSHNDGDFEEIPEEYLQ) form a disordered region. Thr45 carries O-linked (GalNAc...) threonine glycosylation. Residues 55–65 (DFEEIPEEYLQ) form an interaction with fibrinogen-binding exosite of thrombin region. The span at 55-65 (DFEEIPEEYLQ) shows a compositional bias: acidic residues. Tyr63 carries the post-translational modification Sulfotyrosine.

It belongs to the protease inhibitor I14 (hirudin) family.

It is found in the secreted. Hirudin is a potent thrombin-specific protease inhibitor. It forms a stable non-covalent complex with alpha-thrombin, thereby abolishing its ability to cleave fibrinogen. This Hirudo medicinalis (Medicinal leech) protein is Hirudin-2B.